The sequence spans 345 residues: Alpha-2-HS-glycoprotein (345 aa).

An N-terminal signal peptide occupies residues 1-18 (MKSLVLLLCFAQLWGCQS). In terms of domain architecture, Cystatin fetuin-A-type 1 spans 19–133 (APQGTGLGFR…QFRVMHTQCH (115 aa)). 6 disulfides stabilise this stretch: C32-C336, C89-C100, C114-C132, C146-C149, C208-C219, and C230-C247. N99 carries an N-linked (GlcNAc...) asparagine glycan. Position 134 is a phosphoserine (S134). T135 bears the Phosphothreonine mark. S138 bears the Phosphoserine mark. In terms of domain architecture, Cystatin fetuin-A-type 2 spans 144–250 (KLCPRCPLLT…EEVSVACKLF (107 aa)). Residues N156 and N176 are each glycosylated (N-linked (GlcNAc...) asparagine). Phosphoserine is present on residues S305, S309, S312, and S314. The disordered stretch occupies residues 312-334 (SASGETLHSPKVGQPGAAGPVSP).

It belongs to the fetuin family. Post-translationally, phosphorylated by FAM20C in the extracellular medium. In terms of tissue distribution, liver is the major site of synthesis, but fetuin is also expressed in limb buds and other extrahepatic tissues during development.

It is found in the secreted. Its function is as follows. Probably involved in differentiation. Functionally, (Microbial infection) Facilitates invasion of hepatocytes by Plasmodium berghei sporozoites. This is Alpha-2-HS-glycoprotein (Ahsg) from Mus musculus (Mouse).